The following is a 350-amino-acid chain: Phosphate acyltransferase (350 aa).

This sequence belongs to the PlsX family. As to quaternary structure, homodimer. Probably interacts with PlsY.

The protein resides in the cytoplasm. The enzyme catalyses a fatty acyl-[ACP] + phosphate = an acyl phosphate + holo-[ACP]. It functions in the pathway lipid metabolism; phospholipid metabolism. Functionally, catalyzes the reversible formation of acyl-phosphate (acyl-PO(4)) from acyl-[acyl-carrier-protein] (acyl-ACP). This enzyme utilizes acyl-ACP as fatty acyl donor, but not acyl-CoA. This Chelativorans sp. (strain BNC1) protein is Phosphate acyltransferase.